Here is a 352-residue protein sequence, read N- to C-terminus: N-acetyl-gamma-glutamyl-phosphate reductase (352 aa).

The active site involves Cys158.

This sequence belongs to the NAGSA dehydrogenase family. Type 1 subfamily.

It is found in the cytoplasm. The enzyme catalyses N-acetyl-L-glutamate 5-semialdehyde + phosphate + NADP(+) = N-acetyl-L-glutamyl 5-phosphate + NADPH + H(+). Its pathway is amino-acid biosynthesis; L-arginine biosynthesis; N(2)-acetyl-L-ornithine from L-glutamate: step 3/4. Functionally, catalyzes the NADPH-dependent reduction of N-acetyl-5-glutamyl phosphate to yield N-acetyl-L-glutamate 5-semialdehyde. This chain is N-acetyl-gamma-glutamyl-phosphate reductase, found in Mycobacterium bovis (strain BCG / Tokyo 172 / ATCC 35737 / TMC 1019).